The chain runs to 291 residues: 4-hydroxy-tetrahydrodipicolinate synthase (291 aa).

Thr-44 contributes to the pyruvate binding site. Catalysis depends on Tyr-132, which acts as the Proton donor/acceptor. The active-site Schiff-base intermediate with substrate is the Lys-160. Val-202 is a pyruvate binding site.

The protein belongs to the DapA family. As to quaternary structure, homotetramer; dimer of dimers.

The protein resides in the cytoplasm. It carries out the reaction L-aspartate 4-semialdehyde + pyruvate = (2S,4S)-4-hydroxy-2,3,4,5-tetrahydrodipicolinate + H2O + H(+). The protein operates within amino-acid biosynthesis; L-lysine biosynthesis via DAP pathway; (S)-tetrahydrodipicolinate from L-aspartate: step 3/4. Catalyzes the condensation of (S)-aspartate-beta-semialdehyde [(S)-ASA] and pyruvate to 4-hydroxy-tetrahydrodipicolinate (HTPA). The protein is 4-hydroxy-tetrahydrodipicolinate synthase of Clostridium perfringens (strain SM101 / Type A).